We begin with the raw amino-acid sequence, 119 residues long: MDLIRKIEAQNKKNEAFVFNVGDTVKVVYKIIEGNNERLQSFEGIIISFQNKGIGKTFLVRKISSGIGVEKIFPVYSPIIEKVEVLRRGKVRRAKLYYMRNRIGKAAMKIKERLNFKRS.

The protein belongs to the bacterial ribosomal protein bL19 family.

Its function is as follows. This protein is located at the 30S-50S ribosomal subunit interface and may play a role in the structure and function of the aminoacyl-tRNA binding site. This Borreliella afzelii (strain PKo) (Borrelia afzelii) protein is Large ribosomal subunit protein bL19.